We begin with the raw amino-acid sequence, 156 residues long: Small ribosomal subunit protein uS7 (156 aa).

This sequence belongs to the universal ribosomal protein uS7 family. As to quaternary structure, part of the 30S ribosomal subunit. Contacts proteins S9 and S11.

One of the primary rRNA binding proteins, it binds directly to 16S rRNA where it nucleates assembly of the head domain of the 30S subunit. Is located at the subunit interface close to the decoding center, probably blocks exit of the E-site tRNA. The chain is Small ribosomal subunit protein uS7 from Pseudomonas fluorescens (strain SBW25).